We begin with the raw amino-acid sequence, 268 residues long: LOB domain-containing protein 13 (268 aa).

Positions 51-152 (TPCAACKLLR…SELTTVRTEI (102 aa)) constitute an LOB domain. The segment at 191–268 (LLPPPPPPPP…SSDNNVHYFD (78 aa)) is disordered. Pro residues-rich tracts occupy residues 192–205 (LPPP…PRPP) and 212–222 (PAPPPTPPVSL). The span at 223–243 (PSPSMVVSSSSSSNSSATNSM) shows a compositional bias: low complexity. Over residues 250–268 (STAGYSNSLSSDNNVHYFD) the composition is skewed to polar residues.

The protein belongs to the LOB domain-containing protein family. In terms of tissue distribution, expressed in shoots and roots and at low levels in flowers, but not in leaves or inflorescence stems.

The chain is LOB domain-containing protein 13 (LBD13) from Arabidopsis thaliana (Mouse-ear cress).